A 450-amino-acid polypeptide reads, in one-letter code: Phosphoglucosamine mutase (450 aa).

The active-site Phosphoserine intermediate is Ser101. 4 residues coordinate Mg(2+): Ser101, Asp240, Asp242, and Asp244. A Phosphoserine modification is found at Ser101.

Belongs to the phosphohexose mutase family. Requires Mg(2+) as cofactor. Post-translationally, activated by phosphorylation.

The catalysed reaction is alpha-D-glucosamine 1-phosphate = D-glucosamine 6-phosphate. In terms of biological role, catalyzes the conversion of glucosamine-6-phosphate to glucosamine-1-phosphate. The chain is Phosphoglucosamine mutase from Streptococcus equi subsp. zooepidemicus (strain MGCS10565).